A 374-amino-acid chain; its full sequence is MPGVRWVRIVGVACAALSALALSVTSASATSRIKDLANIEGVRQNQLIGYGLVVGLNGTGDTLNNIPFTKQSLQAMLERMGVNIRGATIRTGNVAAVMVTGNLPAFATQGTRMDVTVSALGDAKNLQGGTLLVTPLLGADGNVYAVAQGSLAISGFQAEGEAAKIVRGVPTVGRIANGAIIEREIEFALNRLPNVRLALRNADFTTAKRIAAAVNDYLGVKTAEPIDPSTVQLSIPPEFKGNVVAFLTEIEQLQVDPDLAAKIVIDERSGIIVMGRDVRVATVAVAQGNLTVTISESPQVSQPNPLSRGRTVVAPRSSVSVTEDGRKLALVKDGVSLQQLVDGLNGLGIGPRDMISILQAIKAAGAIEADIEVM.

A signal peptide spans 1–29 (MPGVRWVRIVGVACAALSALALSVTSASA).

It belongs to the FlgI family. The basal body constitutes a major portion of the flagellar organelle and consists of four rings (L,P,S, and M) mounted on a central rod.

It localises to the periplasm. The protein localises to the bacterial flagellum basal body. In terms of biological role, assembles around the rod to form the L-ring and probably protects the motor/basal body from shearing forces during rotation. This is Flagellar P-ring protein 1 from Bradyrhizobium diazoefficiens (strain JCM 10833 / BCRC 13528 / IAM 13628 / NBRC 14792 / USDA 110).